The primary structure comprises 560 residues: Membrane protein insertase YidC (560 aa).

The helical transmembrane segment at 7–27 (ILIVALAIVSYVMVLKWNQDY) threads the bilayer. The span at 38-56 (ASSTTTSGLPDTATGNNAA) shows a compositional bias: polar residues. A disordered region spans residues 38–76 (ASSTTTSGLPDTATGNNAAASDDIPRAASDTSAPAETPV). 4 helical membrane-spanning segments follow: residues 367–387 (IVGNWGWSIIFLTMLIKGIFF), 437–457 (LGGCLPILVQMPVFLSLYWVL), 468–488 (FMLWITDLSIKDPFFILPIIM), and 515–535 (PIIFTFFFLWFPAGLVLYWVV).

This sequence belongs to the OXA1/ALB3/YidC family. Type 1 subfamily. Interacts with the Sec translocase complex via SecD. Specifically interacts with transmembrane segments of nascent integral membrane proteins during membrane integration.

The protein resides in the cell inner membrane. Functionally, required for the insertion and/or proper folding and/or complex formation of integral membrane proteins into the membrane. Involved in integration of membrane proteins that insert both dependently and independently of the Sec translocase complex, as well as at least some lipoproteins. Aids folding of multispanning membrane proteins. The polypeptide is Membrane protein insertase YidC (Pseudomonas fluorescens (strain Pf0-1)).